The primary structure comprises 268 residues: Tryptophan synthase alpha chain (268 aa).

Active-site proton acceptor residues include Glu49 and Asp60.

Belongs to the TrpA family. In terms of assembly, tetramer of two alpha and two beta chains.

It catalyses the reaction (1S,2R)-1-C-(indol-3-yl)glycerol 3-phosphate + L-serine = D-glyceraldehyde 3-phosphate + L-tryptophan + H2O. Its pathway is amino-acid biosynthesis; L-tryptophan biosynthesis; L-tryptophan from chorismate: step 5/5. In terms of biological role, the alpha subunit is responsible for the aldol cleavage of indoleglycerol phosphate to indole and glyceraldehyde 3-phosphate. This chain is Tryptophan synthase alpha chain, found in Escherichia coli (strain ATCC 8739 / DSM 1576 / NBRC 3972 / NCIMB 8545 / WDCM 00012 / Crooks).